Here is a 162-residue protein sequence, read N- to C-terminus: NADH-quinone oxidoreductase subunit I (162 aa).

4Fe-4S ferredoxin-type domains follow at residues 52 to 82 and 93 to 122; these read LRRY…IEAG and VRYD…EGPN. 8 residues coordinate [4Fe-4S] cluster: Cys62, Cys65, Cys68, Cys72, Cys102, Cys105, Cys108, and Cys112.

The protein belongs to the complex I 23 kDa subunit family. As to quaternary structure, NDH-1 is composed of 14 different subunits. Subunits NuoA, H, J, K, L, M, N constitute the membrane sector of the complex. The cofactor is [4Fe-4S] cluster.

It localises to the cell inner membrane. The enzyme catalyses a quinone + NADH + 5 H(+)(in) = a quinol + NAD(+) + 4 H(+)(out). Its function is as follows. NDH-1 shuttles electrons from NADH, via FMN and iron-sulfur (Fe-S) centers, to quinones in the respiratory chain. The immediate electron acceptor for the enzyme in this species is believed to be ubiquinone. Couples the redox reaction to proton translocation (for every two electrons transferred, four hydrogen ions are translocated across the cytoplasmic membrane), and thus conserves the redox energy in a proton gradient. This Nitrobacter winogradskyi (strain ATCC 25391 / DSM 10237 / CIP 104748 / NCIMB 11846 / Nb-255) protein is NADH-quinone oxidoreductase subunit I.